We begin with the raw amino-acid sequence, 319 residues long: Mas-related G-protein coupled receptor member D (319 aa).

Over 1-30 (MNYTPYSSPAPGLTISPTMDPVTWVYFSVT) the chain is Extracellular. Residues 31–51 (FLAMATCVCGIVGNSMVIWLL) traverse the membrane as a helical segment. The Cytoplasmic portion of the chain corresponds to 52-64 (SFHRVQRSPFCTY). Residues 65–85 (VLNLAVADLLFLLCMASLLSL) form a helical membrane-spanning segment. Residues 86–92 (ETGPLLT) lie on the Extracellular side of the membrane. Residues 93 to 113 (ASTSARVYEGMKRIKYFAYTA) form a helical membrane-spanning segment. Topologically, residues 114-144 (GLSLLTAISTQRCLSVLFPIWYKCHRPQHLS) are cytoplasmic. Residues 145-165 (GVVCGVLWALALLMNFLASFF) form a helical membrane-spanning segment. The Extracellular segment spans residues 166 to 184 (CVQFWHPDKYQCFKVDMVF). A helical membrane pass occupies residues 185–205 (NSLILGIFMPVMVLTSAIIFI). Residues 206 to 220 (RMRKNSLLQRRQPRR) lie on the Cytoplasmic side of the membrane. The helical transmembrane segment at 221 to 241 (LYVVILTSVLVFLTCSLPLGI) threads the bilayer. Residues 242–260 (NWFLLYWVELPQAVRLLYV) are Extracellular-facing. Residues 261–281 (CSSRFSSSLSSSANPVIYFLV) traverse the membrane as a helical segment. Over 282–319 (GSQKSHRLQESLGAVLGRALQDEPEGRETPSTCTNDGV) the chain is Cytoplasmic.

Belongs to the G-protein coupled receptor 1 family. Mas subfamily. In terms of tissue distribution, co-expressed in the small diameter neurons with P2X3 and VR1 in dorsal root ganglia.

Its subcellular location is the cell membrane. In terms of biological role, may regulate nociceptor function and/or development, including the sensation or modulation of pain. Functions as a specific membrane receptor for beta-alanine. The receptor couples with G-protein G(q) and G(i). This Rattus norvegicus (Rat) protein is Mas-related G-protein coupled receptor member D (Mrgprd).